Reading from the N-terminus, the 325-residue chain is ATP phosphoribosyltransferase (325 aa).

This sequence belongs to the ATP phosphoribosyltransferase family. Long subfamily. It depends on Mg(2+) as a cofactor.

The protein resides in the cytoplasm. The catalysed reaction is 1-(5-phospho-beta-D-ribosyl)-ATP + diphosphate = 5-phospho-alpha-D-ribose 1-diphosphate + ATP. Its pathway is amino-acid biosynthesis; L-histidine biosynthesis; L-histidine from 5-phospho-alpha-D-ribose 1-diphosphate: step 1/9. With respect to regulation, feedback inhibited by histidine. Its function is as follows. Catalyzes the condensation of ATP and 5-phosphoribose 1-diphosphate to form N'-(5'-phosphoribosyl)-ATP (PR-ATP). Has a crucial role in the pathway because the rate of histidine biosynthesis seems to be controlled primarily by regulation of HisG enzymatic activity. The protein is ATP phosphoribosyltransferase of Rhodopseudomonas palustris (strain BisB18).